A 366-amino-acid chain; its full sequence is Zinc finger protein ubi-d4 B (366 aa).

Disordered stretches follow at residues 41–94 and 140–167; these read ASAP…DGSS and DDLDDEDYEEDTPKRRKGKSKGKGIGGA. Basic and acidic residues predominate over residues 76–86; sequence PDPEQMLKKEG. A compositionally biased stretch (acidic residues) spans 140-149; sequence DDLDDEDYEE. The C2H2-type zinc finger occupies 183 to 206; it reads YACDICGKRYKNRPGLSYHYAHSH. Positions 211 to 243 are disordered; it reads EGAGAEDKEDSQPPTPIMHRSEEQKSKKGPDGL. The segment covering 229 to 240 has biased composition (basic and acidic residues); the sequence is HRSEEQKSKKGP. PHD-type zinc fingers lie at residues 247–307 and 304–354; these read NNYC…CKCC and CKCC…CLDL.

It belongs to the requiem/DPF family.

Its subcellular location is the cytoplasm. It is found in the nucleus. May be a transcription factor required for the apoptosis response following survival factor withdrawal from myeloid cells. Might also have a role in the development and maturation of lymphoid cells. The sequence is that of Zinc finger protein ubi-d4 B (req-b) from Xenopus laevis (African clawed frog).